The following is a 185-amino-acid chain: Small ribosomal subunit protein uS5 (185 aa).

The S5 DRBM domain maps to 18–81 (FVDKLVHINR…ESAKRALIRV (64 aa)). The interval 157-185 (SPRSVAARRGIKVSQLQSRRRVEDAEATD) is disordered. The segment covering 176–185 (RRVEDAEATD) has biased composition (basic and acidic residues).

It belongs to the universal ribosomal protein uS5 family. As to quaternary structure, part of the 30S ribosomal subunit. Contacts proteins S4 and S8.

With S4 and S12 plays an important role in translational accuracy. In terms of biological role, located at the back of the 30S subunit body where it stabilizes the conformation of the head with respect to the body. This Xanthobacter autotrophicus (strain ATCC BAA-1158 / Py2) protein is Small ribosomal subunit protein uS5.